Here is a 697-residue protein sequence, read N- to C-terminus: Testis-specific gene 10 protein (697 aa).

Residues 556–688 (QMTNERISMQ…SPDRGLDRSL (133 aa)) form an interaction with HIF1A region. A disordered region spans residues 656–684 (NAYNLGPMKPNTKCHSPERAHHRSPDRGL). Residues 670 to 684 (HSPERAHHRSPDRGL) show a composition bias toward basic and acidic residues. Residue S687 is modified to Phosphoserine.

This sequence belongs to the CEP135/TSGA10 family. In terms of assembly, interacts with HIF1A. Post-translationally, processed into N-terminal 27-kDa and C-terminal 55-kDa fragments. In terms of tissue distribution, predominantly expressed in testis, in spermatozoa (at protein level). Not detected in Leydig cells. The N-terminal 27-kDa fragment is also detected in liver, while the C-terminal 55-kDa fragment is also found retina, brain and kidney (at protein level).

It is found in the cytoplasm. The protein localises to the cytoskeleton. Its subcellular location is the microtubule organizing center. It localises to the centrosome. The protein resides in the centriole. Functionally, plays a role in spermatogenesis. When overexpressed, prevents nuclear localization of HIF1A. This chain is Testis-specific gene 10 protein (Tsga10), found in Mus musculus (Mouse).